The chain runs to 629 residues: Interleukin-23 receptor (629 aa).

Residues 1-23 form the signal peptide; it reads MNQVTIQWDAVIALYILFSWCHG. The Extracellular segment spans residues 24–355; it reads GITNINCSGH…LTSDNRGDIG (332 aa). N29 carries N-linked (GlcNAc...) asparagine; partial glycosylation. Residues N47, N81, and N141 are each glycosylated (N-linked (GlcNAc...) asparagine). 2 consecutive Fibronectin type-III domains span residues 127–217 and 219–318; these read IPDE…LDDI and IPSA…TPET. Residue N180 is glycosylated (N-linked (GlcNAc...) (high mannose) asparagine). N-linked (GlcNAc...) asparagine glycosylation is found at N232 and N262. N-linked (GlcNAc...) asparagine; partial glycosylation occurs at N273. A helical transmembrane segment spans residues 356–376; that stretch reads LLLGMIVFAVMLSILSLIGIF. Residues 377-629 lie on the Cytoplasmic side of the membrane; sequence NRSFRTGIKR…HFNRISLLEK (253 aa).

The protein belongs to the type I cytokine receptor family. Type 2 subfamily. As to quaternary structure, heterodimer with IL12RB1. In presence of IL23, the heterodimer forms the IL23 receptor. Interacts with JAK2 and in presence of IL23 with STAT3. In terms of processing, phosphorylated in response to IL23. Expressed by monocytes, Th1, Th0, NK and dendritic cells. Isoform 1 is specifically expressed in NK cells.

It is found in the cell membrane. Associates with IL12RB1 to form the interleukin-23 receptor. Binds IL23 and mediates T-cells, NK cells and possibly certain macrophage/myeloid cells stimulation probably through activation of the Jak-Stat signaling cascade. IL23 functions in innate and adaptive immunity and may participate in acute response to infection in peripheral tissues. IL23 may be responsible for autoimmune inflammatory diseases and be important for tumorigenesis. In Homo sapiens (Human), this protein is Interleukin-23 receptor (IL23R).